Consider the following 498-residue polypeptide: MADNKTENALSSDATEVRAQKLKLLREQIGDVYPAHFHRTMTNAELGAKYESLEPDVETQDVVTVAGRVYSSRNSGMFMDIHDASGKIQIFSHKDVTGEEARALLPMIDIGDIIGVTGVVRRTKRGELTINAQKIEMLTKSLLPMPEKWHGLSDIELRYRKRHLDIMTNEDSKLRFQQRSKIVSGIRRFMENDGFMEVETPMLQSIYGGATAEPFKTHHNTLKLDMYLRIAPELFLKRTLVSGLTDKVFEINRNFRNEGVSTRHNPEFTMMECYWAYADYEDMMDLVERLFEALALSIHGTTEFDFGDKRLSFKGPFKRVPMPDAVKEATGIDFLTIKTDEEARAAAKAAGFAVEKDWTWGECLAFIFEEKVEATLIQPSHVTHFPKDISPFAKEVPGEPRLVERFETYCNAWELGNAFSELNDPEEQRRRMVEQLEQAHARGEKEKQLDEEFLDAIDQGMPPAGGLGIGVDRLIMLLTNAPSIRDVILFPARRNKAD.

Mg(2+) contacts are provided by E407 and E414.

The protein belongs to the class-II aminoacyl-tRNA synthetase family. Homodimer. It depends on Mg(2+) as a cofactor.

The protein localises to the cytoplasm. The enzyme catalyses tRNA(Lys) + L-lysine + ATP = L-lysyl-tRNA(Lys) + AMP + diphosphate. The chain is Lysine--tRNA ligase from Rhizobium etli (strain CIAT 652).